Here is a 114-residue protein sequence, read N- to C-terminus: Iron-sulfur cluster insertion protein ErpA (114 aa).

C42, C106, and C108 together coordinate iron-sulfur cluster.

Belongs to the HesB/IscA family. As to quaternary structure, homodimer. Iron-sulfur cluster serves as cofactor.

Functionally, required for insertion of 4Fe-4S clusters for at least IspG. This chain is Iron-sulfur cluster insertion protein ErpA, found in Enterobacter sp. (strain 638).